A 54-amino-acid polypeptide reads, in one-letter code: VVIVDCSDYPTHGCTLELKPICGSDNQTYSNKCGFCNAVAQSNGTLTLSHFGKC.

The 51-residue stretch at 4 to 54 (VDCSDYPTHGCTLELKPICGSDNQTYSNKCGFCNAVAQSNGTLTLSHFGKC) folds into the Kazal-like domain. 3 disulfide bridges follow: Cys6–Cys36, Cys14–Cys33, and Cys22–Cys54. Residue Asn43 is glycosylated (N-linked (GlcNAc...) asparagine).

It localises to the secreted. This is Ovomucoid from Aepypodius arfakianus (Wattled brush turkey).